A 405-amino-acid polypeptide reads, in one-letter code: Acetate kinase (405 aa).

Asparagine 10 provides a ligand contact to Mg(2+). Lysine 17 contributes to the ATP binding site. Residue arginine 93 coordinates substrate. The active-site Proton donor/acceptor is aspartate 150. Residues 210-214, 284-286, and 332-336 contribute to the ATP site; these read HLGNG, DMR, and GVGEN. Position 386 (glutamate 386) interacts with Mg(2+).

It belongs to the acetokinase family. Homodimer. Mg(2+) is required as a cofactor. Mn(2+) serves as cofactor.

The protein resides in the cytoplasm. The enzyme catalyses acetate + ATP = acetyl phosphate + ADP. It participates in metabolic intermediate biosynthesis; acetyl-CoA biosynthesis; acetyl-CoA from acetate: step 1/2. In terms of biological role, catalyzes the formation of acetyl phosphate from acetate and ATP. Can also catalyze the reverse reaction. This is Acetate kinase from Streptomyces avermitilis (strain ATCC 31267 / DSM 46492 / JCM 5070 / NBRC 14893 / NCIMB 12804 / NRRL 8165 / MA-4680).